The sequence spans 359 residues: Short chain dehydrogenase resG (359 aa).

5 residues coordinate NADP(+): K87, D110, N137, Y237, and K241. Y237 functions as the Proton donor in the catalytic mechanism. The Lowers pKa of active site Tyr role is filled by K241.

It belongs to the short-chain dehydrogenases/reductases (SDR) family.

Its pathway is antifungal biosynthesis. In terms of biological role, short chain dehydrogenase; part of the gene cluster that mediates the biosynthesis of the tetrahydropyranyl antifungal agent restricticin that acts as an inhibitor of CYP51 and blocks the ergosterol biosynthesis. The highly reducing polyketide synthase resH, the short chain dehydrogenase resG, the cyclase resF, the FAD-dependent monooxygenase resA and the enoylreductase resD are required to generate the first stable intermediate desmethylrestrictinol. ResH with resD biosynthesize the first polyketide chain intermediate that is reduced by resG, followed by epoxidation by resA before 6-endo cyclization via epoxide opening by resF leads to desmethylrestrictinol. The methyltransferase resE then catalyzes the C4 O-methylation of desmethylrestrictinol to produce restrictinol, and the nonribosomal peptide synthetase resC catalyzes the C3 esterification of restrictinol with glycine that leads to restricticin. In Aspergillus sclerotiorum, this protein is Short chain dehydrogenase resG.